Reading from the N-terminus, the 576-residue chain is MDGDRGKRDSYWSTSPSGSTTKLASGWERSSKVDTWLLILSFTQWALSIATVIICIIISARQGYSTKEYSMTVEALNMSSREVKESLTSLIRQEVIARAVNIQSSVQTGIPVLLNKNSRDVIQMIDKSCSRQELTQLCESTIAVHHAEGIAPLEPHSFWRCPVGEPYLSSDPKISLLLGPSLLSGSTTISGCVRLPSLSIGEAIYAYSSNLITQGCADIGKSYQVLQLGYISLNSDMFPDLNPVVSHTYDINDNRKSCSVVATGTRGYQLCSMPTVDERTDYSSDGIEDLVLDVLDLKGSTKSHRYRNSEVDLDHPFSALYPSVGNGIATEGSLIFLGYGGLTTPLQGDTKCRTQGCQQVSQDTCNEALKITWLGGKQVVNVIIRVNDYLSERPKIRVTTIPITQNYLGAEGRLLKLGDRVYIYTRSSGWHSQLQIGVLDVSHPLTINWTPHEALSRPGNKECNWYNTCPKECISGVYTDAYPLSPDAANVATVTLYANTSRVNPTIMYSNTTNIINMLRIKDVQLEVAYTTISSCITHFGKGYCFHIIEINQKSLNTLQPMLFKTSIPKLCKAES.

Residues 1 to 10 show a composition bias toward basic and acidic residues; that stretch reads MDGDRGKRDS. Positions 1–24 are disordered; it reads MDGDRGKRDSYWSTSPSGSTTKLA. Over 1-37 the chain is Intravirion; sequence MDGDRGKRDSYWSTSPSGSTTKLASGWERSSKVDTWL. The tract at residues 10 to 14 is incorporation in virion; the sequence is SYWST. Residues 11-23 are compositionally biased toward polar residues; the sequence is YWSTSPSGSTTKL. A helical membrane pass occupies residues 38–58; it reads LILSFTQWALSIATVIICIII. An involved in interaction with F protein region spans residues 59-140; it reads SARQGYSTKE…RQELTQLCES (82 aa). Over 59–576 the chain is Virion surface; the sequence is SARQGYSTKE…SIPKLCKAES (518 aa). Residue Asn77 is glycosylated (N-linked (GlcNAc...) asparagine; by host). 4 disulfides stabilise this stretch: Cys192/Cys216, Cys258/Cys271, Cys357/Cys469, and Cys463/Cys473. The segment at 254 to 259 is involved in neuraminidase activity; that stretch reads NRKSCS. Asn499 and Asn511 each carry an N-linked (GlcNAc...) asparagine; by host glycan. A disulfide bridge connects residues Cys536 and Cys545.

The protein belongs to the paramyxoviruses hemagglutinin-neuraminidase family. As to quaternary structure, homotetramer; composed of disulfide-linked homodimers. Interacts with F protein trimer. Post-translationally, N-glycosylated; glycans consist of a mixture of high mannose-type oligosaccharides and of complex-type oligosaccharides.

The protein resides in the virion membrane. The protein localises to the host cell membrane. It catalyses the reaction Hydrolysis of alpha-(2-&gt;3)-, alpha-(2-&gt;6)-, alpha-(2-&gt;8)- glycosidic linkages of terminal sialic acid residues in oligosaccharides, glycoproteins, glycolipids, colominic acid and synthetic substrates.. Its function is as follows. Attaches the virus to sialic acid-containing cell receptors and thereby initiating infection. Binding of HN protein to the receptor induces a conformational change that allows the F protein to trigger virion/cell membranes fusion. In terms of biological role, neuraminidase activity ensures the efficient spread of the virus by dissociating the mature virions from the neuraminic acid containing glycoproteins. This is Hemagglutinin-neuraminidase (HN) from Sendai virus (strain Harris) (SeV).